The sequence spans 350 residues: Autophagy-related protein 3 (350 aa).

Positions 85 to 166 (NFAGDAGLEE…EEDDEAIIRD (82 aa)) are flexible region. The segment at 97–171 (VDDGDEFKGS…AIIRDTDASG (75 aa)) is disordered. Residues 102-113 (EFKGSKGDDDGW) show a composition bias toward basic and acidic residues. Residues 146–161 (DDDDDIPDMEDEEDDE) are compositionally biased toward acidic residues. The active-site Glycyl thioester intermediate is the cysteine 244. A handle region region spans residues 248 to 326 (PVMKTLLDRA…DQEVAIRVDQ (79 aa)). 2 positions are modified to N6-acetyllysine: lysine 262 and lysine 267.

This sequence belongs to the ATG3 family. Monomer. Interacts with ATG8 through an intermediate thioester bond through the C-terminal Gly of ATG8. Also interacts with the 40 amino acid C-terminal region of the E1-like ATG7 enzyme. Also interacts with the ATG12-ATG5 conjugate. Interacts with HAT1. In terms of processing, acetylated by HAT1 at Lys-262 and Lys-267, which affects the interaction with ATG8 and prevents autophagy during both appressorium development and nutrient starvation.

It localises to the preautophagosomal structure. It is found in the cytoplasm. Its function is as follows. E2 conjugating enzyme required for the cytoplasm to vacuole transport (Cvt) and autophagy. Required for selective autophagic degradation of the nucleus (nucleophagy) as well as for mitophagy which contributes to regulate mitochondrial quantity and quality by eliminating the mitochondria to a basal level to fulfill cellular energy requirements and preventing excess ROS production. Responsible for the E2-like covalent binding of phosphatidylethanolamine to the C-terminal Gly of ATG8. The ATG12-ATG5 conjugate plays a role of an E3 and promotes the transfer of ATG8 from ATG3 to phosphatidylethanolamine (PE). This step is required for the membrane association of ATG8. The formation of the ATG8-phosphatidylethanolamine conjugate is essential for autophagy and for the cytoplasm to vacuole transport (Cvt). The ATG8-PE conjugate mediates tethering between adjacent membranes and stimulates membrane hemifusion, leading to expansion of the autophagosomal membrane during autophagy. Plays a role in appressorium formation and pathogenicity. In Pyricularia oryzae (strain 70-15 / ATCC MYA-4617 / FGSC 8958) (Rice blast fungus), this protein is Autophagy-related protein 3.